The chain runs to 782 residues: ATP-dependent 6-phosphofructokinase, muscle type (782 aa).

At threonine 2 the chain carries N-acetylthreonine. The tract at residues 2–390 is N-terminal catalytic PFK domain 1; the sequence is THEEHHAAKT…NWEVYKLLAH (389 aa). Residues glycine 25, 88–89, and 118–121 contribute to the ATP site; these read RC and GDGS. Residue aspartate 119 coordinates Mg(2+). Serine 133 is modified (phosphoserine). Residues 164-166, arginine 201, 208-210, glutamate 264, arginine 292, and 298-301 contribute to the substrate site; these read SID, MGR, and HVQR. The Proton acceptor role is filled by aspartate 166. Serine 377 carries the post-translational modification Phosphoserine. An interdomain linker region spans residues 391-403; sequence IRPPVSKTSATMH. Residues 404–782 form a C-terminal regulatory PFK domain 2 region; sequence TVAVMNVGAP…SRKRSGETSI (379 aa). Beta-D-fructose 2,6-bisphosphate contacts are provided by residues arginine 473 and 530–534; that span reads TVSNN. An O-linked (GlcNAc) serine glycan is attached at serine 532. The residue at position 559 (lysine 559) is an N6-(2-hydroxyisobutyryl)lysine. Residues arginine 568, 575–577, glutamate 631, arginine 657, and 663–666 each bind beta-D-fructose 2,6-bisphosphate; these read MGG and HMQQ. Residue serine 669 is modified to Phosphoserine. A beta-D-fructose 2,6-bisphosphate-binding site is contributed by arginine 737. The residue at position 777 (serine 777) is a Phosphoserine.

The protein belongs to the phosphofructokinase type A (PFKA) family. ATP-dependent PFK group I subfamily. Eukaryotic two domain clade 'E' sub-subfamily. Homo- and heterotetramers. Phosphofructokinase (PFK) enzyme functions as a tetramer composed of different combinations of 3 types of subunits, called PFKM (M), PFKL (L) and PFKP (P). The composition of the PFK tetramer differs according to the tissue type it is present in. The kinetic and regulatory properties of the tetrameric enzyme are dependent on the subunit composition, hence can vary across tissues. Interacts (via C-terminus) with HK1 (via N-terminal spermatogenic cell-specific region). The cofactor is Mg(2+). Post-translationally, glcNAcylation decreases enzyme activity.

The protein localises to the cytoplasm. The catalysed reaction is beta-D-fructose 6-phosphate + ATP = beta-D-fructose 1,6-bisphosphate + ADP + H(+). It functions in the pathway carbohydrate degradation; glycolysis; D-glyceraldehyde 3-phosphate and glycerone phosphate from D-glucose: step 3/4. Its activity is regulated as follows. Allosterically activated by ADP, AMP, or fructose 2,6-bisphosphate, and allosterically inhibited by ATP or citrate. Functionally, catalyzes the phosphorylation of D-fructose 6-phosphate to fructose 1,6-bisphosphate by ATP, the first committing step of glycolysis. This is ATP-dependent 6-phosphofructokinase, muscle type (PFKM) from Canis lupus familiaris (Dog).